The chain runs to 316 residues: uncharacterized protein (316 aa).

In terms of domain architecture, S4 RNA-binding spans 16–89; it reads ERLDKFLARA…IPINIIYEDE (74 aa). Aspartate 140 is an active-site residue.

It belongs to the pseudouridine synthase RluA family.

It carries out the reaction a uridine in RNA = a pseudouridine in RNA. This is an uncharacterized protein from Aquifex aeolicus (strain VF5).